A 301-amino-acid chain; its full sequence is Probable 5-dehydro-4-deoxyglucarate dehydratase (301 aa).

This sequence belongs to the DapA family.

It carries out the reaction 5-dehydro-4-deoxy-D-glucarate + H(+) = 2,5-dioxopentanoate + CO2 + H2O. Its pathway is carbohydrate acid metabolism; D-glucarate degradation; 2,5-dioxopentanoate from D-glucarate: step 2/2. This Rhizobium meliloti (strain 1021) (Ensifer meliloti) protein is Probable 5-dehydro-4-deoxyglucarate dehydratase.